The primary structure comprises 635 residues: Threonine--tRNA ligase (635 aa).

Positions 1–58 (MIHVTCNQEAFELPEGASAMDLANKMKQSHCFVGALINDQEKDLSTTLQDGDTVLFLT) constitute a TGS domain. The catalytic stretch occupies residues 237–528 (DHRVLGTKLD…LIEHFKGRFP (292 aa)). Residues Cys328, His379, and His505 each contribute to the Zn(2+) site.

The protein belongs to the class-II aminoacyl-tRNA synthetase family. In terms of assembly, homodimer. Zn(2+) is required as a cofactor.

It localises to the cytoplasm. It carries out the reaction tRNA(Thr) + L-threonine + ATP = L-threonyl-tRNA(Thr) + AMP + diphosphate + H(+). Catalyzes the attachment of threonine to tRNA(Thr) in a two-step reaction: L-threonine is first activated by ATP to form Thr-AMP and then transferred to the acceptor end of tRNA(Thr). Also edits incorrectly charged L-seryl-tRNA(Thr). The sequence is that of Threonine--tRNA ligase from Chlamydia trachomatis serovar L2b (strain UCH-1/proctitis).